Here is a 209-residue protein sequence, read N- to C-terminus: MTIELLTPFTKVELEPEIKEKKRKQVGILGGNFNPVHNAHLIVADQVRQQLGLDQVLLMPEYQPPHVDKKETIPEHHRLKMLELAIEGIDGLVIETIELERKGISYTYDTMKILTEKNPDTDYYFIIGADMVDYLPKWYRIDELVDMVQFVGVQRPRYKVGTSYPVIWVDVPLMDISSSMVRDFLAQGRKPNFLLPQPVLDYIEKEGLY.

Belongs to the NadD family.

It carries out the reaction nicotinate beta-D-ribonucleotide + ATP + H(+) = deamido-NAD(+) + diphosphate. It functions in the pathway cofactor biosynthesis; NAD(+) biosynthesis; deamido-NAD(+) from nicotinate D-ribonucleotide: step 1/1. In terms of biological role, catalyzes the reversible adenylation of nicotinate mononucleotide (NaMN) to nicotinic acid adenine dinucleotide (NaAD). This is Probable nicotinate-nucleotide adenylyltransferase from Streptococcus pneumoniae serotype 4 (strain ATCC BAA-334 / TIGR4).